The sequence spans 144 residues: Short-chain diamines transporter (144 aa).

4 helical membrane passes run 9–29 (IHAI…LSFI), 35–55 (EVTG…NMIF), 76–96 (ILHA…MIAY), and 103–123 (IDAF…TFIF).

The protein belongs to the proteobacterial antimicrobial compound efflux (PACE) (TC 2.A.117) family. In terms of assembly, exists in a monomer-homodimer equilibrium. The dimer is probably the functional form of the protein, and the assembly of the dimer is mediated by binding of chlorhexidine and promoted by high pH conditions.

Its subcellular location is the cell inner membrane. Protonation/deprotonation of Glu-15 may play an important role in transporter function. Cadaverin transport is inhibited in the presence of CCCP. In terms of biological role, mediates the efflux of short-chain diamines when energized by an electrochemical gradient. Recognizes specifically the short-chain diamines cadaverine and putrescine as substrates, and promotes the active transport of these substrates in exchange for a cation. Protons are probably the primary source of energy for transport, however it was not possible to conclude with complete certainty that protons, rather than alternative cations such as Na(+) ions, are exchanged for substrates by AceI. In addition, is involved in resistance to the synthetic biocide chlorhexidine, a widely used antiseptic and disinfectant in both hospital and community settings. Interacts directly with chlorhexidine and mediates its efflux via an energy-dependent mechanism. The polypeptide is Short-chain diamines transporter (Acinetobacter baumannii (strain ATCC 17978 / DSM 105126 / CIP 53.77 / LMG 1025 / NCDC KC755 / 5377)).